A 240-amino-acid chain; its full sequence is Adapter protein MecA (240 aa).

The segment covering 119–132 (QRKQQKKNHQDKQQ) has biased composition (basic and acidic residues). Residues 119 to 138 (QRKQQKKNHQDKQQRRAHKP) are disordered.

The protein belongs to the MecA family. As to quaternary structure, homodimer.

Enables the recognition and targeting of unfolded and aggregated proteins to the ClpC protease or to other proteins involved in proteolysis. This Staphylococcus epidermidis (strain ATCC 35984 / DSM 28319 / BCRC 17069 / CCUG 31568 / BM 3577 / RP62A) protein is Adapter protein MecA.